The following is a 332-amino-acid chain: GDP-mannose transporter 2 (332 aa).

The Cytoplasmic segment spans residues 1-12; that stretch reads MSSLKVSQQDKK. A helical transmembrane segment spans residues 13–33; the sequence is WVNSGSVAILAYCASSILMTI. Topologically, residues 34–47 are lumenal; the sequence is TNKVVMSDRTFNMN. The helical transmembrane segment at 48–68 threads the bilayer; that stretch reads FLLLFIQSLVCVITLLVLKVL. The Cytoplasmic portion of the chain corresponds to 69–84; sequence GSVNFRSFNKTDARNW. A helical transmembrane segment spans residues 85–105; the sequence is FPISICLVLMIFTSSKSLQYL. Over 106 to 108 the chain is Lumenal; that stretch reads SVP. The chain crosses the membrane as a helical span at residues 109–129; it reads VYTIFKNLTIIVIAYGEVLFF. Residues 130 to 131 lie on the Cytoplasmic side of the membrane; it reads GS. Residues 132–152 form a helical membrane-spanning segment; that stretch reads SVGNMELGSFALMIVSSLIAA. The Lumenal segment spans residues 153-174; sequence HGDYLHSVERLKKMLGPNVSFS. N-linked (GlcNAc...) asparagine glycosylation is present at asparagine 170. A helical membrane pass occupies residues 175–195; the sequence is FIVNIGYFWIAANCFASALFV. Topologically, residues 196 to 211 are cytoplasmic; the sequence is LLMRKRIQVTNFKDFD. Residues 212–232 traverse the membrane as a helical segment; the sequence is TMFYNNVLSLPLLLLGSYLFE. Topologically, residues 233 to 248 are lumenal; it reads DWSQENLLPHVDIDNL. A glycan (N-linked (GlcNAc...) asparagine) is linked at asparagine 247. Residues 249–269 form a helical membrane-spanning segment; sequence STMIISGLASVAISYCSGWCV. Topologically, residues 270-274 are cytoplasmic; that stretch reads RVTSS. Residues 275–295 traverse the membrane as a helical segment; it reads TTYSMVGALNKLPIALTGFLF. Residues 296 to 300 lie on the Lumenal side of the membrane; sequence NDAAR. A helical transmembrane segment spans residues 301-321; the sequence is NLSSAASILLGFASGIIYAVA. The Cytoplasmic segment spans residues 322–332; the sequence is KQKKLQNSEKI.

Belongs to the TPT transporter family. SLC35D subfamily. As to quaternary structure, homooligomer.

It is found in the golgi apparatus membrane. The protein resides in the cytoplasmic vesicle membrane. Its subcellular location is the endoplasmic reticulum membrane. In terms of biological role, involved in the import of GDP-mannose from the cytoplasm into the Golgi lumen. The sequence is that of GDP-mannose transporter 2 (VRG4-2) from Vanderwaltozyma polyspora (strain ATCC 22028 / DSM 70294 / BCRC 21397 / CBS 2163 / NBRC 10782 / NRRL Y-8283 / UCD 57-17) (Kluyveromyces polysporus).